The sequence spans 616 residues: Dihydroxy-acid dehydratase (616 aa).

Asp-81 is a Mg(2+) binding site. Cys-122 contacts [2Fe-2S] cluster. Positions 123 and 124 each coordinate Mg(2+). An N6-carboxylysine modification is found at Lys-124. Position 195 (Cys-195) interacts with [2Fe-2S] cluster. Residue Glu-491 participates in Mg(2+) binding. Ser-517 serves as the catalytic Proton acceptor.

This sequence belongs to the IlvD/Edd family. Homodimer. It depends on [2Fe-2S] cluster as a cofactor. Mg(2+) serves as cofactor.

It catalyses the reaction (2R)-2,3-dihydroxy-3-methylbutanoate = 3-methyl-2-oxobutanoate + H2O. It carries out the reaction (2R,3R)-2,3-dihydroxy-3-methylpentanoate = (S)-3-methyl-2-oxopentanoate + H2O. The protein operates within amino-acid biosynthesis; L-isoleucine biosynthesis; L-isoleucine from 2-oxobutanoate: step 3/4. It participates in amino-acid biosynthesis; L-valine biosynthesis; L-valine from pyruvate: step 3/4. Functionally, functions in the biosynthesis of branched-chain amino acids. Catalyzes the dehydration of (2R,3R)-2,3-dihydroxy-3-methylpentanoate (2,3-dihydroxy-3-methylvalerate) into 2-oxo-3-methylpentanoate (2-oxo-3-methylvalerate) and of (2R)-2,3-dihydroxy-3-methylbutanoate (2,3-dihydroxyisovalerate) into 2-oxo-3-methylbutanoate (2-oxoisovalerate), the penultimate precursor to L-isoleucine and L-valine, respectively. This Shigella sonnei (strain Ss046) protein is Dihydroxy-acid dehydratase.